Here is a 276-residue protein sequence, read N- to C-terminus: MTTKELFDRICRKRSFLCVGLDTDVKKIPPHLLNEDDPILAFNKAIIDATAEYCVAFKPNMAFYESMGSFGAHSFEKTIEYIRERYPDQFIIADAKRGDIGNTSDMYARSFFEHLKVDALTVSPYMGEDSISPFLSYAGKFTVLLALTSNKGSQDFQMMRDADGEYLFERVIRISQTWDNAGQLMYVVGATQASMLKDIREIVPDAFLLVPGVGAQGGSLEDVAEYGMNAHCGLLVNASRSIIYADNTEGFAAKAAGEAAAMQRQMEIALRAKALI.

Residue Lys96 is the Proton donor of the active site.

The protein belongs to the OMP decarboxylase family. Type 2 subfamily.

It catalyses the reaction orotidine 5'-phosphate + H(+) = UMP + CO2. It participates in pyrimidine metabolism; UMP biosynthesis via de novo pathway; UMP from orotate: step 2/2. This chain is Orotidine 5'-phosphate decarboxylase, found in Porphyromonas gingivalis (strain ATCC BAA-308 / W83).